Consider the following 166-residue polypeptide: Small ribosomal subunit protein uS5 (166 aa).

An S5 DRBM domain is found at 11–74 (LQEKLIAVNR…EKARRNMINV (64 aa)).

This sequence belongs to the universal ribosomal protein uS5 family. In terms of assembly, part of the 30S ribosomal subunit. Contacts proteins S4 and S8.

In terms of biological role, with S4 and S12 plays an important role in translational accuracy. Functionally, located at the back of the 30S subunit body where it stabilizes the conformation of the head with respect to the body. This is Small ribosomal subunit protein uS5 from Haemophilus ducreyi (strain 35000HP / ATCC 700724).